Here is a 24-residue protein sequence, read N- to C-terminus: Brevinin-1HSa (24 aa).

Cysteine 18 and cysteine 24 are joined by a disulfide.

As to expression, expressed by the skin glands.

It is found in the secreted. Functionally, has antibacterial activity against the Gram-positive bacterium S.aureus ATCC 25923 (MIC=3 uM) and the Gram-negative bacterium E.coli ATCC 25726 (MIC=24 uM). This is Brevinin-1HSa from Odorrana hosii (Hose's rock frog).